Here is a 261-residue protein sequence, read N- to C-terminus: Methyltransferase nsrG (261 aa).

A methyltransferase domain region spans residues 49 to 141 (DVGAGNGPYA…AHQLRPGALF (93 aa)).

Belongs to the methyltransferase superfamily.

It participates in secondary metabolite biosynthesis. Its function is as follows. Methyltransferase; part of the gene cluster that mediates the biosynthesis of the tetrahydroxanthone dimer neosartorin, which exhibits antibacterial activity. The two different monomeric units appear to be synthesized by the same set of enzymes, among which the Baeyer-Villiger monooxygenase nsrF is the key enzyme for the divergence of the biosynthetic routes. The pathway begins with the synthesis of atrochrysone thioester by the polyketide synthase nsrB. The atrochrysone carboxyl ACP thioesterase nsrC then breaks the thioester bond and releases the atrochrysone carboxylic acid from AacuL. Atrochrysone carboxylic acid is decarboxylated by the decarboxylase nsrE, and oxidized by the anthrone oxygenase nsrD to yield emodin. Emodin is then reduced to emodin hydroquinone by the oxidoreductase nsrR. A-ring reduction by the short chain dehydrogenase nsrJ, dehydration by the scytalone dehydratase-like protein nsrI and probable spontaneous re-oxidation, results in overall deoxygenation to chrysophanol. The Baeyer-Villiger monooxygenase nsrF accepts chrysophanol as a substrate to insert one oxygen atom at two different positions to yield the precursors of both monomric units. NsrF is promiscuous/flexible in interacting with the 2 (non methylated and methylated) aromatic rings of chrysophanol, thus diverging the biosynthetic pathway at this point. After the hydrolysis of the lactones, methylesterification by the methyltransferase nsrG yields respectively moniliphenone and 2,2',6'-trihydroxy-4-methyl-6-methoxya-cyldiphenylmethanone. The next steps are the hydroxylation by the FAD-dependent monooxygenase nsrK, followed by isomerization by the monooxygenase nsrQ. The short chain dehydrogenase/reductase nsrO then catalyzes the C-5 ketoreduction to give the xanthone skeleton of blennolide C and 5-acetylblennolide A. The acetyltransferase nsrL has a strict substrate specificity and uses only blennolide A but not blennolide C to yield 5-acetylblennolide A as the single-acetylated product. In the final step of the biosynthesis, the heterodimerization of the 2 xanthones, blennolide C and 5-acetylblennolide A, is catalyzed by the cytochrome P450 monooxygenase nsrP. NsrP can utilize at least three different xanthones as its substrates to perform the dimerization reaction. The sequence is that of Methyltransferase nsrG from Aspergillus novofumigatus (strain IBT 16806).